The chain runs to 347 residues: MQIKQNISLKPYHTFAIEQCSHYLVEVGSVDELVDIYANPDFRELPKLILGSGSNVLFTQPFSGVVVVNRLSGKTLSEDESFYYIHAEGGEDWPNLVEWCVQQGIGGLENLALIPGCAGSAPIQNIGAYGVEFKDVCQYVDILMLDDFSQRRLSAEECQFGYRDSVFKHALYNQCVVIAVGLKLPKTWQANNSYGPLQEIAEHELSPMSIFHKVCEVRREKLPDPKQIGNAGSFFKNPIIDKAHWQQLKAQFPNIVAYPAGEQMKVAAGWLIDQCDFKGVQVGGAQVHPKQALVLTNAQSCTAQDIIQLASLICDAVWDKYQIALEHEVRFISAVGETCLSELRVES.

An FAD-binding PCMH-type domain is found at 16-187 (AIEQCSHYLV…IAVGLKLPKT (172 aa)). Residue arginine 163 is part of the active site. Residue serine 233 is the Proton donor of the active site. Glutamate 328 is an active-site residue.

Belongs to the MurB family. It depends on FAD as a cofactor.

The protein resides in the cytoplasm. The enzyme catalyses UDP-N-acetyl-alpha-D-muramate + NADP(+) = UDP-N-acetyl-3-O-(1-carboxyvinyl)-alpha-D-glucosamine + NADPH + H(+). It functions in the pathway cell wall biogenesis; peptidoglycan biosynthesis. Its function is as follows. Cell wall formation. This is UDP-N-acetylenolpyruvoylglucosamine reductase from Vibrio vulnificus (strain YJ016).